Consider the following 213-residue polypeptide: Redox-sensing transcriptional repressor Rex (213 aa).

Positions 18–57 (LYYRFLKNLHASGKQRVSSAELSEAVKVDPATIRRDFSYF) form a DNA-binding region, H-T-H motif. Residue 92–97 (GVGNLG) participates in NAD(+) binding.

This sequence belongs to the transcriptional regulatory Rex family. As to quaternary structure, homodimer.

It localises to the cytoplasm. In terms of biological role, modulates transcription in response to changes in cellular NADH/NAD(+) redox state. The polypeptide is Redox-sensing transcriptional repressor Rex (Geobacillus kaustophilus (strain HTA426)).